A 300-amino-acid chain; its full sequence is tRNA dimethylallyltransferase (300 aa).

11–18 lines the ATP pocket; sequence GPTAVGKS. Substrate is bound at residue 13–18; that stretch reads TAVGKS. Positions 35-38 are interaction with substrate tRNA; sequence DSIQ.

Belongs to the IPP transferase family. As to quaternary structure, monomer. Mg(2+) serves as cofactor.

It catalyses the reaction adenosine(37) in tRNA + dimethylallyl diphosphate = N(6)-dimethylallyladenosine(37) in tRNA + diphosphate. Functionally, catalyzes the transfer of a dimethylallyl group onto the adenine at position 37 in tRNAs that read codons beginning with uridine, leading to the formation of N6-(dimethylallyl)adenosine (i(6)A). The chain is tRNA dimethylallyltransferase from Borrelia recurrentis (strain A1).